Consider the following 160-residue polypeptide: Cyclic pyranopterin monophosphate synthase (160 aa).

Residues 74 to 76 and 112 to 113 each bind substrate; these read LSH and ME. Aspartate 127 is a catalytic residue.

It belongs to the MoaC family. In terms of assembly, homohexamer; trimer of dimers.

It carries out the reaction (8S)-3',8-cyclo-7,8-dihydroguanosine 5'-triphosphate = cyclic pyranopterin phosphate + diphosphate. Its pathway is cofactor biosynthesis; molybdopterin biosynthesis. Functionally, catalyzes the conversion of (8S)-3',8-cyclo-7,8-dihydroguanosine 5'-triphosphate to cyclic pyranopterin monophosphate (cPMP). This Geobacter sulfurreducens (strain ATCC 51573 / DSM 12127 / PCA) protein is Cyclic pyranopterin monophosphate synthase.